Reading from the N-terminus, the 385-residue chain is T-box transcription factor TBX10 (385 aa).

The segment at residues 69 to 252 is a DNA-binding region (T-box); it reads LEMKPLWEEF…SNPFAKGFRE (184 aa). Disordered regions lie at residues 283 to 310 and 328 to 359; these read GSAE…NQLL and QNLY…AGDQ. The span at 293-307 shows a compositional bias: polar residues; it reads KASASSSRTPTQPHN. Positions 331-347 are enriched in low complexity; the sequence is YPGSPSRAGPPRARLAP.

It is found in the nucleus. Functionally, probable transcriptional regulator involved in developmental processes. The chain is T-box transcription factor TBX10 (Tbx10) from Mus musculus (Mouse).